Here is a 175-residue protein sequence, read N- to C-terminus: Probable coatomer subunit zeta-A (175 aa).

This sequence belongs to the adaptor complexes small subunit family. As to quaternary structure, oligomeric complex that consists of at least the alpha, beta, beta', gamma, delta, epsilon and zeta subunits.

It localises to the cytoplasm. Its subcellular location is the golgi apparatus membrane. The protein resides in the cytoplasmic vesicle. The protein localises to the COPI-coated vesicle membrane. Functionally, the coatomer is a cytosolic protein complex that binds to dilysine motifs and reversibly associates with Golgi non-clathrin-coated vesicles, which further mediate biosynthetic protein transport from the ER, via the Golgi up to the trans Golgi network. Coatomer complex is required for budding from Golgi membranes, and is essential for the retrograde Golgi-to-ER transport of dilysine-tagged proteins. The zeta subunit may be involved in regulating the coat assembly and, hence, the rate of biosynthetic protein transport due to its association-dissociation properties with the coatomer complex. The polypeptide is Probable coatomer subunit zeta-A (copZa) (Dictyostelium discoideum (Social amoeba)).